Reading from the N-terminus, the 829-residue chain is Ent-cassa-12,15-diene synthase (829 aa).

Positions 1–50 (MMLLGSPSSGGYGGKFAGASPAGGTTTMAPSAKQPSSRAPPPGITGGRND) are disordered. Over residues 23–37 (GGTTTMAPSAKQPSS) the composition is skewed to polar residues. 4 residues coordinate Mg(2+): D576, D580, N720, and E728. The short motif at 576-580 (DDLFD) is the DDXXD motif element.

The protein belongs to the terpene synthase family. The cofactor is Mg(2+). In terms of tissue distribution, expressed in roots and stems.

It catalyses the reaction ent-copalyl diphosphate = ent-cassa-12,15-diene + diphosphate. In terms of biological role, involved in phytocassane phytoalexins biosynthesis. Catalyzes the conversion of ent-copalyl diphosphate to the phytoalexin precursor ent-cassa-12,15-diene. The polypeptide is Ent-cassa-12,15-diene synthase (KSL7) (Oryza sativa subsp. japonica (Rice)).